Consider the following 391-residue polypeptide: Succinyl-diaminopimelate desuccinylase (391 aa).

His-74 provides a ligand contact to Zn(2+). Asp-76 is an active-site residue. Residue Asp-107 coordinates Zn(2+). Residue Glu-141 is the Proton acceptor of the active site. Zn(2+)-binding residues include Glu-142, Glu-170, and His-360.

The protein belongs to the peptidase M20A family. DapE subfamily. As to quaternary structure, homodimer. It depends on Zn(2+) as a cofactor. Requires Co(2+) as cofactor.

The enzyme catalyses N-succinyl-(2S,6S)-2,6-diaminopimelate + H2O = (2S,6S)-2,6-diaminopimelate + succinate. It functions in the pathway amino-acid biosynthesis; L-lysine biosynthesis via DAP pathway; LL-2,6-diaminopimelate from (S)-tetrahydrodipicolinate (succinylase route): step 3/3. Its function is as follows. Catalyzes the hydrolysis of N-succinyl-L,L-diaminopimelic acid (SDAP), forming succinate and LL-2,6-diaminopimelate (DAP), an intermediate involved in the bacterial biosynthesis of lysine and meso-diaminopimelic acid, an essential component of bacterial cell walls. The chain is Succinyl-diaminopimelate desuccinylase from Variovorax paradoxus (strain S110).